Reading from the N-terminus, the 385-residue chain is 8-amino-7-oxononanoate synthase (385 aa).

R21 is a binding site for substrate. A pyridoxal 5'-phosphate-binding site is contributed by 108–109 (GF). H133 serves as a coordination point for substrate. Positions 179, 207, and 233 each coordinate pyridoxal 5'-phosphate. At K236 the chain carries N6-(pyridoxal phosphate)lysine. Substrate is bound at residue T352.

Belongs to the class-II pyridoxal-phosphate-dependent aminotransferase family. BioF subfamily. In terms of assembly, homodimer. The cofactor is pyridoxal 5'-phosphate.

It carries out the reaction 6-carboxyhexanoyl-[ACP] + L-alanine + H(+) = (8S)-8-amino-7-oxononanoate + holo-[ACP] + CO2. It functions in the pathway cofactor biosynthesis; biotin biosynthesis. Functionally, catalyzes the decarboxylative condensation of pimeloyl-[acyl-carrier protein] and L-alanine to produce 8-amino-7-oxononanoate (AON), [acyl-carrier protein], and carbon dioxide. In Salmonella paratyphi A (strain ATCC 9150 / SARB42), this protein is 8-amino-7-oxononanoate synthase.